The sequence spans 726 residues: ORC ubiquitin ligase 1 (726 aa).

The RING-type; degenerate zinc finger occupies 18–56; sequence CHICLGKVRQPVICINNHVFCSICIDLWLKNNSQCPACR. Coiled coils occupy residues 87 to 129 and 155 to 270; these read LRKT…TILD and ETVA…MNSI. Ser210 is modified (phosphoserine). A disordered region spans residues 274–335; that stretch reads ALPADGKGSK…ARQESTSKAE (62 aa). The span at 280 to 290 shows a compositional bias: basic and acidic residues; it reads KGSKGSEEDVA. Low complexity predominate over residues 300–320; that stretch reads KQPSSSTSSSSHLAKPSSSRL. Residues 321–334 show a composition bias toward polar residues; it reads CDTSSARQESTSKA. Phosphoserine occurs at positions 526, 553, 561, 568, 570, 719, and 721. The segment at 687 to 726 is disordered; sequence QSPWSTSFVPEKRNKNVNQSTKRKIQSSLSNASPSKATKS. Positions 702–726 are enriched in polar residues; that stretch reads NVNQSTKRKIQSSLSNASPSKATKS.

Associates with ORC complex. Binds to chromatin; association is cell cycle-regulated, absent from mitotic chromosomes, is associated with chromatin from G1 and partially released from chromatin from mid S-phase. In terms of processing, auto-ubiquitinated.

The protein resides in the chromosome. It catalyses the reaction S-ubiquitinyl-[E2 ubiquitin-conjugating enzyme]-L-cysteine + [acceptor protein]-L-lysine = [E2 ubiquitin-conjugating enzyme]-L-cysteine + N(6)-ubiquitinyl-[acceptor protein]-L-lysine.. In terms of biological role, E3 ubiquitin ligase essential for DNA replication origin activation during S phase. Acts as a replication origin selector which selects the origins to be fired and catalyzes the multi-mono-ubiquitination of a subset of chromatin-bound ORC3 and ORC5 during S-phase. This chain is ORC ubiquitin ligase 1 (OBI1), found in Pongo abelii (Sumatran orangutan).